Here is a 187-residue protein sequence, read N- to C-terminus: GTP cyclohydrolase 1 (187 aa).

Zn(2+)-binding residues include cysteine 76, histidine 79, and cysteine 148.

It belongs to the GTP cyclohydrolase I family. As to quaternary structure, toroid-shaped homodecamer, composed of two pentamers of five dimers.

The catalysed reaction is GTP + H2O = 7,8-dihydroneopterin 3'-triphosphate + formate + H(+). The protein operates within cofactor biosynthesis; 7,8-dihydroneopterin triphosphate biosynthesis; 7,8-dihydroneopterin triphosphate from GTP: step 1/1. The chain is GTP cyclohydrolase 1 from Acetivibrio thermocellus (strain ATCC 27405 / DSM 1237 / JCM 9322 / NBRC 103400 / NCIMB 10682 / NRRL B-4536 / VPI 7372) (Clostridium thermocellum).